Here is a 426-residue protein sequence, read N- to C-terminus: Lipase 7 (426 aa).

The N-terminal stretch at Met1–Gln15 is a signal peptide. Asn74, Asn175, and Asn179 each carry an N-linked (GlcNAc...) asparagine glycan. 2 disulfide bridges follow: Cys108–Cys269 and Cys341–Cys385. Catalysis depends on Ser190, which acts as the Charge relay system. Asn223 carries an N-linked (GlcNAc...) asparagine glycan. His358 functions as the Charge relay system in the catalytic mechanism. Residues Asn378, Asn379, Asn422, and Asn423 are each glycosylated (N-linked (GlcNAc...) asparagine).

The protein belongs to the AB hydrolase superfamily. Lipase family. Class Lip subfamily.

It carries out the reaction a triacylglycerol + H2O = a diacylglycerol + a fatty acid + H(+). Secreted lipase that is able to hydrolze both the neutral triacylglycerols and the monopalmitate ester Tween 40, allowing the use of hydrolyzed products as carbon sources. Has broad lipolytic activity, which may be important for colonization and subsequent infection, therefore contributing to the persistence and virulence in human tissue. The sequence is that of Lipase 7 from Candida albicans (strain SC5314 / ATCC MYA-2876) (Yeast).